The chain runs to 452 residues: Phosphoglucosamine mutase (452 aa).

Catalysis depends on S104, which acts as the Phosphoserine intermediate. Mg(2+)-binding residues include S104, D244, D246, and D248. S104 is modified (phosphoserine).

Belongs to the phosphohexose mutase family. Requires Mg(2+) as cofactor. Post-translationally, activated by phosphorylation.

It carries out the reaction alpha-D-glucosamine 1-phosphate = D-glucosamine 6-phosphate. Its function is as follows. Catalyzes the conversion of glucosamine-6-phosphate to glucosamine-1-phosphate. The polypeptide is Phosphoglucosamine mutase (Pediococcus pentosaceus (strain ATCC 25745 / CCUG 21536 / LMG 10740 / 183-1w)).